The primary structure comprises 271 residues: MSRVGVLVLGPAGAGKSTFCNAIISHMQSIGRRAHIVNLDPAAEATKYEFTIDIRDLISLEDVMEEFGLGPNGSLIYCFEYLLNNLDWLDEEIGDYNDEYLIFDCPGQIELYTHIPVLPTIVRHLQNQLNFNLCATYLLEAPFVIDTSKFFSGALSAMSAMILLELPHINILSKLDLVKDSHNKKALKKFLNPDPLLLTDKVNEETNPKFHKLNEAIANLVDDFGMVQFLPLEAKNPESVSTILSYIDDVTQWAEAQEPKEPNDQIEIDDM.

GTP is bound at residue 13–18 (GAGKST). Residues 70–72 (GPN) carry the Gly-Pro-Asn (GPN)-loop; involved in dimer interface motif. GTP is bound at residue 173-176 (SKLD).

The protein belongs to the GPN-loop GTPase family. In terms of assembly, heterodimers with GPN1 or GPN2. Binds to RNA polymerase II (RNAPII).

Functionally, small GTPase required for proper nuclear import of RNA polymerase II and III (RNAPII and RNAPIII). May act at an RNAP assembly step prior to nuclear import. The sequence is that of GPN-loop GTPase 3 from Kluyveromyces lactis (strain ATCC 8585 / CBS 2359 / DSM 70799 / NBRC 1267 / NRRL Y-1140 / WM37) (Yeast).